The sequence spans 512 residues: Citrate synthase (512 aa).

Catalysis depends on residues His288, His327, and Asp383. The segment at 483 to 512 (AIPKTATGSKSQLSASIEQSFGEKISPQSH) is disordered. Over residues 488–501 (ATGSKSQLSASIEQ) the composition is skewed to polar residues.

The protein belongs to the citrate synthase family.

The protein resides in the cytoplasm. It catalyses the reaction oxaloacetate + acetyl-CoA + H2O = citrate + CoA + H(+). It functions in the pathway carbohydrate metabolism; tricarboxylic acid cycle; isocitrate from oxaloacetate: step 1/2. This chain is Citrate synthase (gltA), found in Dictyostelium discoideum (Social amoeba).